The sequence spans 420 residues: Tyrosine--tRNA ligase (420 aa).

Y36 serves as a coordination point for L-tyrosine. A 'HIGH' region motif is present at residues 41–50 (PTADSLHIGH). The L-tyrosine site is built by Y170 and Q174. Positions 231–235 (KFGKS) match the 'KMSKS' region motif. Position 234 (K234) interacts with ATP. One can recognise an S4 RNA-binding domain in the interval 353–420 (TNIVEVLIET…KKKYFMVNYQ (68 aa)).

The protein belongs to the class-I aminoacyl-tRNA synthetase family. TyrS type 1 subfamily. In terms of assembly, homodimer.

Its subcellular location is the cytoplasm. It catalyses the reaction tRNA(Tyr) + L-tyrosine + ATP = L-tyrosyl-tRNA(Tyr) + AMP + diphosphate + H(+). In terms of biological role, catalyzes the attachment of tyrosine to tRNA(Tyr) in a two-step reaction: tyrosine is first activated by ATP to form Tyr-AMP and then transferred to the acceptor end of tRNA(Tyr). In Staphylococcus aureus (strain COL), this protein is Tyrosine--tRNA ligase.